The primary structure comprises 858 residues: Taste receptor type 1 member 3 (858 aa).

The signal sequence occupies residues 1–20 (MPALAIMGLSLAAFLELGMG). At 21 to 572 (ASLCLSQQFK…RPKFLAWGEP (552 aa)) the chain is on the extracellular side. An N-linked (GlcNAc...) asparagine; when associated with variant T-60 glycan is attached at Asn58. N-linked (GlcNAc...) asparagine glycosylation is found at Asn85, Asn130, Asn203, Asn264, Asn379, Asn387, Asn418, Asn439, and Asn482. Residues 573–593 (VVLSLLLLLCLVLGLALAALG) form a helical membrane-spanning segment. The Cytoplasmic segment spans residues 594 to 610 (LSVHHWDSPLVQASGGS). A helical transmembrane segment spans residues 611-631 (QFCFGLICLGLFCLSVLLFPG). The Extracellular portion of the chain corresponds to 632–644 (RPSSASCLAQQPM). Residues 645-665 (AHLPLTGCLSTLFLQAAETFV) traverse the membrane as a helical segment. Residues 666–687 (ESELPLSWANWLCSYLRGLWAW) lie on the Cytoplasmic side of the membrane. The helical transmembrane segment at 688–708 (LVVLLATFVEAALCAWYLIAF) threads the bilayer. Residues 709–735 (PPEVVTDWSVLPTEVLEHCHVRSWVSL) lie on the Extracellular side of the membrane. The chain crosses the membrane as a helical span at residues 736 to 756 (GLVHITNAMLAFLCFLGTFLV). Residues 757–767 (QSQPGRYNRAR) are Cytoplasmic-facing. A helical membrane pass occupies residues 768-788 (GLTFAMLAYFITWVSFVPLLA). The Extracellular portion of the chain corresponds to 789–796 (NVQVAYQP). A helical membrane pass occupies residues 797–817 (AVQMGAILVCALGILVTFHLP). Residues 818 to 858 (KCYVLLWLPKLNTQEFFLGRNAKKAADENSGGGEAAQGHNE) are Cytoplasmic-facing.

It belongs to the G-protein coupled receptor 3 family. TAS1R subfamily. As to quaternary structure, forms homodimers or heterodimers with TAS1R1 and TAS1R2. In terms of processing, the Thr-60 variant is predicted to introduce a novel N-linked glycosylation site at Asn-58. The addition of even a short carbohydrate group at Asn-58 is predicted to disrupt one of the contact surfaces required for stability of a dimer. Therefore a Thr-60 variant N-glycosylated at Asn-58 is predicted to be precluded from forming homodimers or heterodimers. In terms of tissue distribution, expressed in circumvallate, foliate and fungiform taste papillae as well as in taste buds on the palate. Also expressed in testis. Not expressed in brain, heart, kidney, liver or spleen. The topographic distribution in various taste papillae is different from those of other T1R members.

The protein resides in the cell membrane. Its function is as follows. Putative taste receptor. TAS1R1/TAS1R3 responds to the umami taste stimulus (the taste of monosodium glutamate) and also to most of the 20 standard L-amino acids, but not to their D-enantiomers or other compounds. TAS1R2/TAS1R3 recognizes diverse natural and synthetic sweeteners. TAS1R3 is essential for the recognition and response to the disaccharide trehalose. Sequence differences within and between species can significantly influence the selectivity and specificity of taste responses. This Mus musculus (Mouse) protein is Taste receptor type 1 member 3 (Tas1r3).